A 918-amino-acid chain; its full sequence is Nitrate reductase [NADH] (918 aa).

The interval 25–44 is disordered; that stretch reads KNGPNHRADSPVRGCNFPNS. Cys-195 is a Mo-molybdopterin binding site. A Cytochrome b5 heme-binding domain is found at 543 to 618; it reads SNTYTLSEVK…LEDYRIGELI (76 aa). Positions 578 and 601 each coordinate heme. The region spanning 661–774 is the FAD-binding FR-type domain; that stretch reads NEKIPCKLIS…KGPLGHIEYT (114 aa). Residues 714 to 717, 731 to 735, Phe-736, Phe-743, 748 to 750, and Thr-801 each bind FAD; these read RAYT, VVKVY, and IMS.

It belongs to the nitrate reductase family. As to quaternary structure, homodimer. The cofactor is FAD. Requires heme as cofactor. It depends on Mo-molybdopterin as a cofactor.

The catalysed reaction is nitrite + NAD(+) + H2O = nitrate + NADH + H(+). Functionally, nitrate reductase is a key enzyme involved in the first step of nitrate assimilation in plants, fungi and bacteria. In Cucurbita maxima (Pumpkin), this protein is Nitrate reductase [NADH].